The primary structure comprises 435 residues: MIGRISQPLLNTSQKFMAPAARTLMLHEHHGMKILQNYEIKVPPFGVAQDAETAFSEAKRIGGKDYVVKAQVLAGGRGKGRFSSGLQGGVQIVFTPDEVKQKAGMMIGANLITKQTDHRGKKCEEVMVCKRLFTRREYYFSITLDRNTNGPIVIASSQGGVNIEEVAATNPDAIVKMPIDVNVGITKELAHEIAVKMGFSKDCEQQASEIIEKLYQMFKGSDATLVEINPMAEDVNGDVYCMDCKLLLDSNAEFRQAKLFDLKDKKQEDELEIRAAAANLNYIRLDGTIGCMVNGAGLAMATMDIIKLHGGEPANFLDVGGGATVEQVTEAFKIITADKDKVSAILVNIFGGIMRCDVIAQGIIQAARELDLKIPIVVRLQGTKVEDAKALIATSQLRILPCDNLDEAAKMVVKLSNIVDLARATNVDVKFELSI.

The transit peptide at 1-20 directs the protein to the mitochondrion; the sequence is MIGRISQPLLNTSQKFMAPA. Residues 32–259 enclose the ATP-grasp domain; the sequence is MKILQNYEIK…SNAEFRQAKL (228 aa). Residues Lys69 and 76–78 contribute to the ATP site; that span reads GRG. Positions 229 and 243 each coordinate Mg(2+). Residues Asn294 and 352 to 354 each bind substrate; that span reads GIM.

Belongs to the succinate/malate CoA ligase beta subunit family. ATP-specific subunit beta subfamily. As to quaternary structure, heterodimer of an alpha and a beta subunit. The beta subunit determines specificity for ATP. Mg(2+) is required as a cofactor.

The protein resides in the mitochondrion. It catalyses the reaction succinate + ATP + CoA = succinyl-CoA + ADP + phosphate. It participates in carbohydrate metabolism; tricarboxylic acid cycle; succinate from succinyl-CoA (ligase route): step 1/1. Its function is as follows. ATP-specific succinyl-CoA synthetase functions in the citric acid cycle (TCA), coupling the hydrolysis of succinyl-CoA to the synthesis of ATP and thus represents the only step of substrate-level phosphorylation in the TCA. The beta subunit provides nucleotide specificity of the enzyme and binds the substrate succinate, while the binding sites for coenzyme A and phosphate are found in the alpha subunit. This is Succinate--CoA ligase [ADP-forming] subunit beta, mitochondrial from Caenorhabditis elegans.